Consider the following 321-residue polypeptide: Queuosine 5'-phosphate N-glycosylase/hydrolase (321 aa).

Queuine-binding residues include phenylalanine 227, aspartate 229, and aspartate 296. The active-site Nucleophile or transition state stabilizer is the aspartate 229.

The protein belongs to the QNG1 protein family.

The catalysed reaction is queuosine 5'-phosphate + H2O = queuine + D-ribose 5-phosphate. In terms of biological role, catalyzes the hydrolysis of queuosine 5'-phosphate, releasing the nucleobase queuine (q). Is required for salvage of queuine from exogenous queuosine (Q) that is imported and then converted to queuosine 5'-phosphate intracellularly. This is Queuosine 5'-phosphate N-glycosylase/hydrolase from Dictyostelium discoideum (Social amoeba).